Consider the following 314-residue polypeptide: Ribosomal protein uL3 glutamine methyltransferase (314 aa).

It belongs to the protein N5-glutamine methyltransferase family. PrmB subfamily.

The enzyme catalyses L-glutaminyl-[ribosomal protein uL3] + S-adenosyl-L-methionine = N(5)-methyl-L-glutaminyl-[ribosomal protein uL3] + S-adenosyl-L-homocysteine + H(+). Functionally, methylates large ribosomal subunit protein uL3 on a specific glutamine residue. This Francisella tularensis subsp. tularensis (strain SCHU S4 / Schu 4) protein is Ribosomal protein uL3 glutamine methyltransferase.